The sequence spans 763 residues: Nibrin (763 aa).

An FHA domain is found at 22–81; that stretch reads YVVGRKNCAILIPEDQSISRCHATLSVSHPSANLGQTNAASVLSIKDSSKYGTTVNGDKM. BRCT domains follow at residues 102–179 and 215–324; these read SKYR…CELL and KRKS…NPRR. Disordered stretches follow at residues 389–496, 535–593, and 738–763; these read VKET…SSQT, SKAA…SEIE, and QTQQVREESLAEDLFRYNPKPSKRRR. Over residues 423–433 the composition is skewed to basic and acidic residues; that stretch reads LFREDETDTRK. Polar residues predominate over residues 434-443; it reads NTPSLLPTKS. The Nuclear localization signal signature appears at 469–474; that stretch reads AKKRDR. A compositionally biased stretch (basic and acidic residues) spans 473 to 482; sequence DRAEDEKEAS. Basic and acidic residues predominate over residues 742-752; the sequence is VREESLAEDLF. Positions 748 to 757 match the FxF/Y motif motif; the sequence is AEDLFRYNPK.

It belongs to the Nibrin family. In terms of assembly, component of the MRN complex composed of two heterodimers rad50 and mre11 associated with a single nbn.

The protein localises to the nucleus. It is found in the chromosome. The protein resides in the PML body. It localises to the telomere. Component of the MRN complex, which plays a central role in double-strand break (DSB) repair, DNA recombination, maintenance of telomere integrity and meiosis. The MRN complex is involved in the repair of DNA double-strand breaks (DSBs) via homologous recombination (HR), an error-free mechanism which primarily occurs during S and G2 phases. The complex (1) mediates the end resection of damaged DNA, which generates proper single-stranded DNA, a key initial steps in HR, and is (2) required for the recruitment of other repair factors and efficient activation of ATM and ATR upon DNA damage. The MRN complex possesses single-strand endonuclease activity and double-strand-specific 3'-5' exonuclease activity, which are provided by MRE11, to initiate end resection, which is required for single-strand invasion and recombination. Within the MRN complex, nbn acts as a protein-protein adapter, which specifically recognizes and binds phosphorylated proteins, promoting their recruitment to DNA damage sites. Recruits mre11 and rad50 components of the MRN complex to DSBs in response to DNA damage. Promotes the recruitment of PI3/PI4-kinase family members atm, atr, and probably DNA-PKcs to the DNA damage sites, activating their functions. Mediates the recruitment of phosphorylated rbbp8/CtIP to DSBs, leading to cooperation between the MRN complex and rbbp8/CtIP to initiate end resection. The MRN complex promotes recruitment of topbp1 to DNA damage sites. The MRN complex and rbbp8/CtIP are also required for chromosome alignment during metaphase. The polypeptide is Nibrin (Xenopus laevis (African clawed frog)).